Reading from the N-terminus, the 687-residue chain is Threonine--tRNA ligase (687 aa).

One can recognise a TGS domain in the interval 1–67; the sequence is MAHLIEAAPN…EQDSKFTPVP (67 aa). The interval 266–572 is catalytic; that stretch reads DHRRLGAELD…LLEHYAGAFP (307 aa). Zn(2+) contacts are provided by cysteine 371, histidine 422, and histidine 549.

It belongs to the class-II aminoacyl-tRNA synthetase family. As to quaternary structure, homodimer. The cofactor is Zn(2+).

Its subcellular location is the cytoplasm. The catalysed reaction is tRNA(Thr) + L-threonine + ATP = L-threonyl-tRNA(Thr) + AMP + diphosphate + H(+). Catalyzes the attachment of threonine to tRNA(Thr) in a two-step reaction: L-threonine is first activated by ATP to form Thr-AMP and then transferred to the acceptor end of tRNA(Thr). Also edits incorrectly charged L-seryl-tRNA(Thr). The chain is Threonine--tRNA ligase from Corynebacterium diphtheriae (strain ATCC 700971 / NCTC 13129 / Biotype gravis).